The primary structure comprises 231 residues: Large ribosomal subunit protein uL1 (231 aa).

The protein belongs to the universal ribosomal protein uL1 family. In terms of assembly, part of the 50S ribosomal subunit.

Binds directly to 23S rRNA. The L1 stalk is quite mobile in the ribosome, and is involved in E site tRNA release. Its function is as follows. Protein L1 is also a translational repressor protein, it controls the translation of the L11 operon by binding to its mRNA. The sequence is that of Large ribosomal subunit protein uL1 from Caldanaerobacter subterraneus subsp. tengcongensis (strain DSM 15242 / JCM 11007 / NBRC 100824 / MB4) (Thermoanaerobacter tengcongensis).